A 308-amino-acid chain; its full sequence is ADP-L-glycero-D-manno-heptose-6-epimerase (308 aa).

Residues F10 to I11, D31 to N32, K38, K53, E75 to S79, and N92 each bind NADP(+). Y139 serves as the catalytic Proton acceptor. K143 serves as a coordination point for NADP(+). Substrate is bound at residue N168. Residues V169 and K177 each contribute to the NADP(+) site. K177 serves as the catalytic Proton acceptor. Substrate contacts are provided by residues S179, H186, F200 to S203, R208, and Y271.

The protein belongs to the NAD(P)-dependent epimerase/dehydratase family. HldD subfamily. Homopentamer. NADP(+) is required as a cofactor.

It carries out the reaction ADP-D-glycero-beta-D-manno-heptose = ADP-L-glycero-beta-D-manno-heptose. It functions in the pathway nucleotide-sugar biosynthesis; ADP-L-glycero-beta-D-manno-heptose biosynthesis; ADP-L-glycero-beta-D-manno-heptose from D-glycero-beta-D-manno-heptose 7-phosphate: step 4/4. In terms of biological role, catalyzes the interconversion between ADP-D-glycero-beta-D-manno-heptose and ADP-L-glycero-beta-D-manno-heptose via an epimerization at carbon 6 of the heptose. This chain is ADP-L-glycero-D-manno-heptose-6-epimerase, found in Haemophilus influenzae (strain PittGG).